Reading from the N-terminus, the 252-residue chain is Putative endonuclease C1F12.06c (252 aa).

The Mg(2+) site is built by D43 and D114.

Belongs to the endonuclease V family.

The protein resides in the cytoplasm. The protein localises to the nucleus. The protein is Putative endonuclease C1F12.06c of Schizosaccharomyces pombe (strain 972 / ATCC 24843) (Fission yeast).